The primary structure comprises 125 residues: uncharacterized protein (125 aa).

It belongs to the asfivirus B125R family.

This is an uncharacterized protein from Ornithodoros (relapsing fever ticks).